Reading from the N-terminus, the 440-residue chain is Translation initiation factor eIF2B subunit gamma (440 aa).

This sequence belongs to the eIF-2B gamma/epsilon subunits family. As to quaternary structure, component of the translation initiation factor 2B (eIF2B) complex which is a heterodecamer of two sets of five different subunits: alpha, beta, gamma, delta and epsilon. Subunits alpha, beta and delta comprise a regulatory subcomplex and subunits epsilon and gamma comprise a catalytic subcomplex. Within the complex, the hexameric regulatory complex resides at the center, with the two heterodimeric catalytic subcomplexes bound on opposite sides.

It localises to the cytoplasm. The protein localises to the cytosol. Its function is as follows. Acts as a component of the translation initiation factor 2B (eIF2B) complex, which catalyzes the exchange of GDP for GTP on the eukaryotic initiation factor 2 (eIF2) complex gamma subunit. Its guanine nucleotide exchange factor activity is repressed when bound to eIF2 complex phosphorylated on the alpha subunit, thereby limiting the amount of methionyl-initiator methionine tRNA available to the ribosome and consequently global translation is repressed. This Dictyostelium discoideum (Social amoeba) protein is Translation initiation factor eIF2B subunit gamma (eif2b3).